Here is a 112-residue protein sequence, read N- to C-terminus: MPDYMVTLESAWIIKDVKTMDDAISIAIGEAGKRLNPAAKYVEIETGMMVCPLCNKALNCAVVVANTALVGLTLQMKVFRAESEEHAVRIAKSVIGKALRDVPLNVQDVQEL.

The protein belongs to the UPF0212 family.

This is UPF0212 protein Mpal_1084 from Methanosphaerula palustris (strain ATCC BAA-1556 / DSM 19958 / E1-9c).